We begin with the raw amino-acid sequence, 183 residues long: Ribosome rescue factor SmrB (183 aa).

One can recognise a Smr domain in the interval 98-173 (LDLHGLTQLQ…GDAALLVLIE (76 aa)).

This sequence belongs to the SmrB family. As to quaternary structure, associates with collided ribosomes, but not with correctly translating polysomes.

Functionally, acts as a ribosome collision sensor. Detects stalled/collided disomes (pairs of ribosomes where the leading ribosome is stalled and a second ribosome has collided with it) and endonucleolytically cleaves mRNA at the 5' boundary of the stalled ribosome. Stalled/collided disomes form a new interface (primarily via the 30S subunits) that binds SmrB. Cleaved mRNA becomes available for tmRNA ligation, leading to ribosomal subunit dissociation and rescue of stalled ribosomes. The chain is Ribosome rescue factor SmrB from Shigella boydii serotype 18 (strain CDC 3083-94 / BS512).